The chain runs to 122 residues: Putative MOB kinase activator-like 2B (122 aa).

Residues His-69 and His-74 each contribute to the Zn(2+) site.

Belongs to the MOB1/phocein family.

It is found in the nucleus. Its subcellular location is the cytoplasm. It localises to the cytoskeleton. The protein resides in the phragmoplast. The polypeptide is Putative MOB kinase activator-like 2B (Arabidopsis thaliana (Mouse-ear cress)).